A 360-amino-acid chain; its full sequence is Phosphoserine aminotransferase (360 aa).

Residue Arg-42 participates in L-glutamate binding. Residues 76–77 (AR), Trp-102, Thr-152, Asp-172, and Gln-195 each bind pyridoxal 5'-phosphate. Lys-196 carries the post-translational modification N6-(pyridoxal phosphate)lysine. 237 to 238 (NT) serves as a coordination point for pyridoxal 5'-phosphate.

Belongs to the class-V pyridoxal-phosphate-dependent aminotransferase family. SerC subfamily. In terms of assembly, homodimer. It depends on pyridoxal 5'-phosphate as a cofactor.

The protein resides in the cytoplasm. The catalysed reaction is O-phospho-L-serine + 2-oxoglutarate = 3-phosphooxypyruvate + L-glutamate. It catalyses the reaction 4-(phosphooxy)-L-threonine + 2-oxoglutarate = (R)-3-hydroxy-2-oxo-4-phosphooxybutanoate + L-glutamate. It participates in amino-acid biosynthesis; L-serine biosynthesis; L-serine from 3-phospho-D-glycerate: step 2/3. Its pathway is cofactor biosynthesis; pyridoxine 5'-phosphate biosynthesis; pyridoxine 5'-phosphate from D-erythrose 4-phosphate: step 3/5. Its function is as follows. Catalyzes the reversible conversion of 3-phosphohydroxypyruvate to phosphoserine and of 3-hydroxy-2-oxo-4-phosphonooxybutanoate to phosphohydroxythreonine. The protein is Phosphoserine aminotransferase of Pasteurella multocida (strain Pm70).